Reading from the N-terminus, the 213-residue chain is Dimethyl sulfoxide reductase transcriptional activator (213 aa).

The HTH bat-type domain occupies 155-206 (LTAKQREAALIAVHHGYYETPRRTELATLAEALGISKSALSQRLNAVEAKLA).

Its function is as follows. Involved in activating dmsEABCD gene expression related to dimethyl sulfoxide (DMSO) reductase. Required for anaerobic respiration on dimethyl sulfoxide (DMSO). This Haloferax volcanii (strain ATCC 29605 / DSM 3757 / JCM 8879 / NBRC 14742 / NCIMB 2012 / VKM B-1768 / DS2) (Halobacterium volcanii) protein is Dimethyl sulfoxide reductase transcriptional activator.